Here is a 614-residue protein sequence, read N- to C-terminus: 1-deoxy-D-xylulose-5-phosphate synthase (614 aa).

Thiamine diphosphate-binding positions include H74 and 115 to 117; that span reads AHS. D146 is a binding site for Mg(2+). Residues 147-148, N175, Y282, and E363 each bind thiamine diphosphate; that span reads GA. N175 lines the Mg(2+) pocket.

The protein belongs to the transketolase family. DXPS subfamily. Homodimer. Requires Mg(2+) as cofactor. It depends on thiamine diphosphate as a cofactor.

The catalysed reaction is D-glyceraldehyde 3-phosphate + pyruvate + H(+) = 1-deoxy-D-xylulose 5-phosphate + CO2. Its pathway is metabolic intermediate biosynthesis; 1-deoxy-D-xylulose 5-phosphate biosynthesis; 1-deoxy-D-xylulose 5-phosphate from D-glyceraldehyde 3-phosphate and pyruvate: step 1/1. Catalyzes the acyloin condensation reaction between C atoms 2 and 3 of pyruvate and glyceraldehyde 3-phosphate to yield 1-deoxy-D-xylulose-5-phosphate (DXP). The protein is 1-deoxy-D-xylulose-5-phosphate synthase of Nitrosomonas eutropha (strain DSM 101675 / C91 / Nm57).